The sequence spans 87 residues: U3-theraphotoxin-Hhn1a 15 (87 aa).

The N-terminal stretch at 1–24 is a signal peptide; sequence MVNMKASMFLTFAGLVLLLVVCYA. Positions 25-52 are excised as a propeptide; it reads SESEEKEFPKEMLSSIFAVDNDFKQEER. Intrachain disulfides connect Cys54–Cys67, Cys61–Cys72, and Cys66–Cys79.

The protein belongs to the neurotoxin 10 (Hwtx-1) family. 51 (Hntx-8) subfamily. Hntx-8 sub-subfamily. In terms of tissue distribution, expressed by the venom gland.

The protein resides in the secreted. Functionally, ion channel inhibitor. This chain is U3-theraphotoxin-Hhn1a 15, found in Cyriopagopus hainanus (Chinese bird spider).